The following is a 365-amino-acid chain: Eukaryotic translation initiation factor 3 subunit H (365 aa).

The region spanning 11 to 160 is the MPN domain; the sequence is VKVEALVVMK…LRAFRLSPKF (150 aa).

Belongs to the eIF-3 subunit H family. In terms of assembly, component of the eukaryotic translation initiation factor 3 (eIF-3) complex.

It is found in the cytoplasm. In terms of biological role, component of the eukaryotic translation initiation factor 3 (eIF-3) complex, which is involved in protein synthesis of a specialized repertoire of mRNAs and, together with other initiation factors, stimulates binding of mRNA and methionyl-tRNAi to the 40S ribosome. The eIF-3 complex specifically targets and initiates translation of a subset of mRNAs involved in cell proliferation. The chain is Eukaryotic translation initiation factor 3 subunit H from Aspergillus niger (strain ATCC MYA-4892 / CBS 513.88 / FGSC A1513).